The following is a 380-amino-acid chain: Probable acyl-CoA dehydrogenase YngJ (380 aa).

FAD is bound by residues 123–132 (FGLTEPNAGS), 156–158 (WIT), arginine 269, and 337–341 (QIHGG). Catalysis depends on glutamate 364, which acts as the Proton acceptor. 366–368 (TSE) contributes to the FAD binding site.

Belongs to the acyl-CoA dehydrogenase family. FAD serves as cofactor.

It catalyses the reaction a 2,3-saturated acyl-CoA + A = a 2,3-dehydroacyl-CoA + AH2. This chain is Probable acyl-CoA dehydrogenase YngJ (yngJ), found in Bacillus subtilis (strain 168).